Consider the following 129-residue polypeptide: Short-chain dehydrogenase/reductase homolog YusR (129 aa).

The protein belongs to the short-chain dehydrogenases/reductases (SDR) family.

The sequence is that of Short-chain dehydrogenase/reductase homolog YusR (yusR) from Bacillus subtilis (strain 168).